A 352-amino-acid chain; its full sequence is Nicotinate-nucleotide--dimethylbenzimidazole phosphoribosyltransferase (352 aa).

Glu318 (proton acceptor) is an active-site residue.

This sequence belongs to the CobT family.

It carries out the reaction 5,6-dimethylbenzimidazole + nicotinate beta-D-ribonucleotide = alpha-ribazole 5'-phosphate + nicotinate + H(+). Its pathway is nucleoside biosynthesis; alpha-ribazole biosynthesis; alpha-ribazole from 5,6-dimethylbenzimidazole: step 1/2. In terms of biological role, catalyzes the synthesis of alpha-ribazole-5'-phosphate from nicotinate mononucleotide (NAMN) and 5,6-dimethylbenzimidazole (DMB). The protein is Nicotinate-nucleotide--dimethylbenzimidazole phosphoribosyltransferase of Azotobacter vinelandii (strain DJ / ATCC BAA-1303).